The primary structure comprises 1058 residues: Structural maintenance of chromosomes protein 6A (1058 aa).

The 1027-residue stretch at 23–1049 (ILRIRLENFM…SMVKSHEKIK (1027 aa)) folds into the Zinc-hook domain. An ATP-binding site is contributed by 50 to 57 (GQNGSGKS). Residues 136 to 449 (KISSRKEELR…NDLKKHQTNK (314 aa)) are a coiled coil. A flexible hinge region spans residues 450–633 (VTAFGGDKVI…PPRPRRPTRL (184 aa)). Residues 634 to 927 (CASFDDQIKD…RNKDLLKREL (294 aa)) adopt a coiled-coil conformation.

Belongs to the SMC family. SMC6 subfamily. As to quaternary structure, forms a heterodimer with SMC5. The SMC5-SMC6 complex is composed of the SMC5 and SMC6 heterodimer attached via their hinge domain and from the non-SMC subunit NSE4A or NSE4B. Expressed in seedlings, rosette leaves and floral buds.

It is found in the nucleus. The protein resides in the chromosome. Core component of the SMC5-SMC6 complex that promotes sister chromatid alignment after DNA damage and facilitates double-stranded DNA breaks (DSBs) repair via homologous recombination between sister chromatids. This is Structural maintenance of chromosomes protein 6A (SMC6A) from Arabidopsis thaliana (Mouse-ear cress).